The following is a 225-amino-acid chain: Protein ZW2 (225 aa).

One can recognise a DOG1 domain in the interval 7–225 (SETFASFFND…FYLRLRDLGV (219 aa)).

May be involved in the regulation of abscisic acid (ABA) sensitivity. In Arabidopsis thaliana (Mouse-ear cress), this protein is Protein ZW2.